The primary structure comprises 464 residues: Argininosuccinate lyase (464 aa).

It belongs to the lyase 1 family. Argininosuccinate lyase subfamily.

It localises to the cytoplasm. It catalyses the reaction 2-(N(omega)-L-arginino)succinate = fumarate + L-arginine. The protein operates within amino-acid biosynthesis; L-arginine biosynthesis; L-arginine from L-ornithine and carbamoyl phosphate: step 3/3. The protein is Argininosuccinate lyase of Janthinobacterium sp. (strain Marseille) (Minibacterium massiliensis).